Consider the following 302-residue polypeptide: Sushi domain-containing protein 6 (302 aa).

The signal sequence occupies residues 1–39 (MCHGKIAPKSSSEFVVTSVGHGVFLQLVILCALLGDGLA). Residues 40-104 (SVCPLPPEPE…TPAMEVSCHL (65 aa)) form the Sushi domain. Disulfide bonds link C42–C89 and C74–C102. The helical transmembrane segment at 120-140 (IVASTASSVALILLLVVLFVL) threads the bilayer. Disordered regions lie at residues 202-241 (GSAP…CEAW) and 256-302 (TSSW…LKEA). 3 stretches are compositionally biased toward polar residues: residues 212–222 (REQQLQGQEAC), 256–267 (TSSWVAGSGSSR), and 279–290 (SDIQSLLSLTSE).

It is found in the membrane. In terms of biological role, may play a role in growth-suppressive activity and cell death. May be involved in the production of chemokine molecules in umbilical vein endothelial cells (HUVECs) cultured in THP1 monocyte LPS-induced medium. Plays a role in preventing tumor onset. In Mus musculus (Mouse), this protein is Sushi domain-containing protein 6.